A 118-amino-acid polypeptide reads, in one-letter code: Large ribosomal subunit protein uL22 (118 aa).

The protein belongs to the universal ribosomal protein uL22 family. In terms of assembly, part of the 50S ribosomal subunit.

Its function is as follows. This protein binds specifically to 23S rRNA; its binding is stimulated by other ribosomal proteins, e.g. L4, L17, and L20. It is important during the early stages of 50S assembly. It makes multiple contacts with different domains of the 23S rRNA in the assembled 50S subunit and ribosome. In terms of biological role, the globular domain of the protein is located near the polypeptide exit tunnel on the outside of the subunit, while an extended beta-hairpin is found that lines the wall of the exit tunnel in the center of the 70S ribosome. This chain is Large ribosomal subunit protein uL22, found in Thermomicrobium roseum (strain ATCC 27502 / DSM 5159 / P-2).